The primary structure comprises 290 residues: uncharacterized protein (290 aa).

This is an uncharacterized protein from Lepidoptera (butterflies and moths).